The sequence spans 88 residues: Small cysteine and glycine repeat-containing protein 1 (88 aa).

Residues 4 to 72 are 10 X 2 AA repeats of CG; that stretch reads CGCGGCGGCG…TCSSCGYSCG (69 aa).

This sequence belongs to the KRTAP type 28 family.

Functionally, in the hair cortex, hair keratin intermediate filaments are embedded in an interfilamentous matrix, consisting of hair keratin-associated proteins (KRTAP), which are essential for the formation of a rigid and resistant hair shaft through their extensive disulfide bond cross-linking with abundant cysteine residues of hair keratins. The matrix proteins include the high-sulfur and high-glycine-tyrosine keratins. The sequence is that of Small cysteine and glycine repeat-containing protein 1 from Homo sapiens (Human).